The sequence spans 413 residues: Glucose-1-phosphate adenylyltransferase (413 aa).

Residues Gly161, 176–177 (EK), and Ser195 contribute to the alpha-D-glucose 1-phosphate site.

Belongs to the bacterial/plant glucose-1-phosphate adenylyltransferase family. Homotetramer.

The catalysed reaction is alpha-D-glucose 1-phosphate + ATP + H(+) = ADP-alpha-D-glucose + diphosphate. The protein operates within glycan biosynthesis; glycogen biosynthesis. In terms of biological role, involved in the biosynthesis of ADP-glucose, a building block required for the elongation reactions to produce glycogen. Catalyzes the reaction between ATP and alpha-D-glucose 1-phosphate (G1P) to produce pyrophosphate and ADP-Glc. The polypeptide is Glucose-1-phosphate adenylyltransferase (Anaeromyxobacter dehalogenans (strain 2CP-C)).